The primary structure comprises 213 residues: MGLNLGVIDYGMGNLHSVGKALERLGEQAVLVQGPEDLKSVDALILPGVGSFDPAIENLRATGLIPHLKDWGNNNRPLLGICLGLQLLFERSDEGSKDGLGLFQGAVERLQSHPNERIPHMGWAPLTVERNCPLLHSDDPTPWVYFVHSYAAVPLNSSVLAATAAYGNAAVTAMVWSGRIGACQFHPEKSSAAGEAMLKRWLHWLHQGAEPVH.

One can recognise a Glutamine amidotransferase type-1 domain in the interval 4–211 (NLGVIDYGMG…LHWLHQGAEP (208 aa)). Cys-82 serves as the catalytic Nucleophile. Active-site residues include His-186 and Glu-188.

In terms of assembly, heterodimer of HisH and HisF.

The protein localises to the cytoplasm. It catalyses the reaction 5-[(5-phospho-1-deoxy-D-ribulos-1-ylimino)methylamino]-1-(5-phospho-beta-D-ribosyl)imidazole-4-carboxamide + L-glutamine = D-erythro-1-(imidazol-4-yl)glycerol 3-phosphate + 5-amino-1-(5-phospho-beta-D-ribosyl)imidazole-4-carboxamide + L-glutamate + H(+). The enzyme catalyses L-glutamine + H2O = L-glutamate + NH4(+). It functions in the pathway amino-acid biosynthesis; L-histidine biosynthesis; L-histidine from 5-phospho-alpha-D-ribose 1-diphosphate: step 5/9. Its function is as follows. IGPS catalyzes the conversion of PRFAR and glutamine to IGP, AICAR and glutamate. The HisH subunit catalyzes the hydrolysis of glutamine to glutamate and ammonia as part of the synthesis of IGP and AICAR. The resulting ammonia molecule is channeled to the active site of HisF. This is Imidazole glycerol phosphate synthase subunit HisH from Synechococcus sp. (strain CC9902).